The chain runs to 775 residues: Rab3 GTPase-activating protein catalytic subunit (775 aa).

Residues Ser173, Ser330, Ser373, Ser375, and Ser384 each carry the phosphoserine modification. The segment at 324 to 351 (DEGKKTSPSDSMTKAYPADAGKAGGQLG) is disordered. Positions 386 to 414 (AEDLRGNGQESTKKGGPKDMAPLKPEGRL) are disordered. Phosphoserine is present on Ser458.

Belongs to the Rab3-GAP catalytic subunit family. The Rab3 GTPase-activating complex is a heterodimer composed of Rab3gap1 and Rab3gap2. The Rab3 GTPase-activating complex interacts with DMXL2. Interacts with LMAN1.

Its subcellular location is the cytoplasm. The protein resides in the endoplasmic reticulum. The protein localises to the golgi apparatus. It localises to the cis-Golgi network. Catalytic subunit of the Rab3 GTPase-activating (Rab3GAP) complex composed of RAB3GAP1 and RAB3GAP2, which has GTPase-activating protein (GAP) activity towards various Rab3 subfamily members (RAB3A, RAB3B, RAB3C and RAB3D), RAB5A and RAB43, and guanine nucleotide exchange factor (GEF) activity towards RAB18. As part of the Rab3GAP complex, acts as a GAP for Rab3 proteins by converting active RAB3-GTP to the inactive form RAB3-GDP. Rab3 proteins are involved in regulated exocytosis of neurotransmitters and hormones. The Rab3GAP complex, acts as a GEF for RAB18 by promoting the conversion of inactive RAB18-GDP to the active form RAB18-GTP. Recruits and stabilizes RAB18 at the cis-Golgi membrane where RAB18 is most likely activated. Also involved in RAB18 recruitment at the endoplasmic reticulum (ER) membrane where it maintains proper ER structure. Required for normal eye and brain development. May participate in neurodevelopmental processes such as proliferation, migration and differentiation before synapse formation, and non-synaptic vesicular release of neurotransmitters. The polypeptide is Rab3 GTPase-activating protein catalytic subunit (Rattus norvegicus (Rat)).